Reading from the N-terminus, the 298-residue chain is Acetaldehyde dehydrogenase (298 aa).

Residue 6–9 coordinates NAD(+); that stretch reads SGNI. The Acyl-thioester intermediate role is filled by cysteine 121. Residues 152–160 and asparagine 271 each bind NAD(+); that span reads SAGPGTRAN.

This sequence belongs to the acetaldehyde dehydrogenase family.

The enzyme catalyses acetaldehyde + NAD(+) + CoA = acetyl-CoA + NADH + H(+). The chain is Acetaldehyde dehydrogenase from Mycobacterium avium (strain 104).